Consider the following 445-residue polypeptide: C4-dicarboxylate transport protein (445 aa).

Transmembrane regions (helical) follow at residues 24 to 44 (VLYV…WLSP), 62 to 82 (LIKM…IAHI), 105 to 125 (FALV…GLAA), 163 to 183 (GDIL…MALG), 201 to 221 (FGVI…AMAF), 234 to 254 (LIGL…LVLG), 322 to 342 (IYMT…LSFG), and 370 to 390 (AGTL…VFSI).

The protein belongs to the dicarboxylate/amino acid:cation symporter (DAACS) (TC 2.A.23) family.

It is found in the cell inner membrane. Its function is as follows. Responsible for the transport of dicarboxylates such as succinate, fumarate, and malate from the periplasm across the membrane. In Rhodopseudomonas palustris (strain ATCC BAA-98 / CGA009), this protein is C4-dicarboxylate transport protein.